The primary structure comprises 407 residues: Imidazolonepropionase (407 aa).

Positions 75 and 77 each coordinate Fe(3+). Zn(2+) contacts are provided by His75 and His77. 4-imidazolone-5-propanoate is bound by residues Arg84, Tyr147, and His180. Position 147 (Tyr147) interacts with N-formimidoyl-L-glutamate. His245 contributes to the Fe(3+) binding site. His245 provides a ligand contact to Zn(2+). Gln248 serves as a coordination point for 4-imidazolone-5-propanoate. Fe(3+) is bound at residue Asp320. Asp320 is a Zn(2+) binding site. N-formimidoyl-L-glutamate contacts are provided by Asn322 and Gly324. Residue Ser325 coordinates 4-imidazolone-5-propanoate.

This sequence belongs to the metallo-dependent hydrolases superfamily. HutI family. Zn(2+) is required as a cofactor. Requires Fe(3+) as cofactor.

The protein resides in the cytoplasm. The enzyme catalyses 4-imidazolone-5-propanoate + H2O = N-formimidoyl-L-glutamate. The protein operates within amino-acid degradation; L-histidine degradation into L-glutamate; N-formimidoyl-L-glutamate from L-histidine: step 3/3. Functionally, catalyzes the hydrolytic cleavage of the carbon-nitrogen bond in imidazolone-5-propanoate to yield N-formimidoyl-L-glutamate. It is the third step in the universal histidine degradation pathway. The protein is Imidazolonepropionase of Pseudoalteromonas atlantica (strain T6c / ATCC BAA-1087).